A 99-amino-acid chain; its full sequence is Putative membrane protein insertion efficiency factor (99 aa).

This sequence belongs to the UPF0161 family.

It is found in the cell membrane. Functionally, could be involved in insertion of integral membrane proteins into the membrane. This is Putative membrane protein insertion efficiency factor from Corynebacterium efficiens (strain DSM 44549 / YS-314 / AJ 12310 / JCM 11189 / NBRC 100395).